Reading from the N-terminus, the 2367-residue chain is Probable G-protein coupled receptor 179 (2367 aa).

An N-terminal signal peptide occupies residues 1-25; sequence MGTRGAVMPPPMWGLLGCCFVCAWA. At 26-381 the chain is on the extracellular side; that stretch reads LGGPRPIRSL…CLVEEAAVLR (356 aa). The tract at residues 62-245 is cache-like region; that stretch reads YLYSGDAQQL…CQEGRLRPGW (184 aa). Asn75 is a glycosylation site (N-linked (GlcNAc...) asparagine). Residues Cys76 and Cys236 are joined by a disulfide bond. Asn298 is a glycosylation site (N-linked (GlcNAc...) asparagine). The chain crosses the membrane as a helical span at residues 382–402; the sequence is AAVLACQACCMLAIFLSMLVS. Residues 403–415 lie on the Cytoplasmic side of the membrane; the sequence is YRCRRNKRIWASG. The helical transmembrane segment at 416–436 threads the bilayer; the sequence is VVLLETVLFGFLLLYFPVFIL. At 437–444 the chain is on the extracellular side; sequence YFKPSVFR. A helical transmembrane segment spans residues 445-465; sequence CIALRWVRLLGFAIVYGTIIL. Cys445 and Cys537 are disulfide-bonded. At 466–493 the chain is on the cytoplasmic side; the sequence is KLYRVLQLFLSRTAQRSALLSSGRLLRR. The chain crosses the membrane as a helical span at residues 494-514; it reads LGLLLLPVLGFLAVWTVGALE. The Extracellular segment spans residues 515 to 543; sequence RGIQHAPLVIRGHTPSGRHFYLCHHDRWD. Residues 544–564 form a helical membrane-spanning segment; sequence YIMVVAELLLLCWGSFLCYAT. Residues 565 to 575 lie on the Cytoplasmic side of the membrane; it reads RAVLSAFHEPR. A helical membrane pass occupies residues 576-594; it reads YMGIALHNELLLSAAFHTA. Residues 595–607 are Extracellular-facing; it reads RFVLVPSLHPDWT. A helical membrane pass occupies residues 608–628; the sequence is LLLFFFHTHSTVTTTLALIFI. The Cytoplasmic portion of the chain corresponds to 629 to 2367; that stretch reads PKFWKLGAPP…PPTVYPWDWE (1739 aa). 12 disordered regions span residues 731–818, 869–932, 1039–1083, 1098–1198, 1247–1431, 1537–1557, 1577–1672, 1723–1757, 1823–1852, 1886–2108, 2133–2212, and 2308–2367; these read ARQH…FRSA, REER…PHPP, KSRA…QQGS, RSTY…AGKT, EVTE…CPWE, PRES…SSKA, DLRP…ERPQ, AIRK…PTPE, SEGT…KGRL, AQAP…GSVE, WEAG…KEAG, and GVRE…WDWE. Residues 738-759 show a composition bias toward low complexity; it reads SGSPGHGSLPGSSRRRLLSSSL. Basic and acidic residues predominate over residues 773-782; it reads STYDQRREQD. Residues 1039 to 1067 show a composition bias toward basic and acidic residues; sequence KSRAGENEMDAEDAHHQREANDVDEDRPK. Over residues 1153–1164 the composition is skewed to polar residues; it reads LQNQQNAHTSRM. Basic and acidic residues-rich tracts occupy residues 1171-1181, 1277-1299, 1341-1362, and 1390-1407; these read EGSREQEDRGR, RALR…KSEP, GRIR…EKPG, and EDGK…QEKQ. The span at 1615–1639 shows a compositional bias: basic and acidic residues; sequence ESQKDKEKMPGKSEIEDVTAWEKPE. Composition is skewed to basic and acidic residues over residues 1840–1851, 1903–1920, 1970–1979, 2023–2054, 2061–2070, and 2165–2180; these read AEQREKALEKGR, AEGH…RQDP, SHLDRQRPDQ, VTER…KSEP, KKPEMADFRQ, and TEEH…REQE. Positions 2326–2340 are enriched in low complexity; that stretch reads PEPSLQEAESQSSSL.

This sequence belongs to the G-protein coupled receptor 3 family. As to quaternary structure, homodimer. Associates with the R7 group RGS-GNB5 complexes, composed of an R7 group RGS subunit (RGS6, RGS7, RGS9 or RGS11) and GNB5, promoting their localization to the cell membrane and regulating the GTPase activator activity of R7 RGS proteins. Interacts with TRPM1. Interacts with GRM6. Interacts with EGFLAM; transsynaptic interaction is required for synaptic organization of photoreceptor cells. Expressed in the retina.

It is found in the cell membrane. The protein localises to the postsynaptic cell membrane. It localises to the cell projection. Its subcellular location is the dendrite. Functionally, orphan receptor involved in vision. Required for signal transduction through retinal depolarizing bipolar cells. Acts as an atypical G-protein coupled receptor that recruits and regulates the R7 group RGS-GNB5 complexes instead of activating G proteins: promotes the GTPase activator activity of R7 RGS proteins, increasing the GTPase activity of G protein alpha subunits, thereby driving them into their inactive GDP-bound form. Associates with components of metabotropic signaling cascade in retina ON-bipolar neurons, such as TRPM1 and GRM6: may control the ability of the GRM6 cascade to gate TRPM1. The protein is Probable G-protein coupled receptor 179 of Homo sapiens (Human).